The primary structure comprises 346 residues: Putative isoaspartyl peptidase/L-asparaginase (346 aa).

The active-site Nucleophile is the Thr207. Residues 235–238 and 257–260 contribute to the substrate site; these read RVGD and TGTG.

Belongs to the Ntn-hydrolases family. Heterodimer of an alpha and beta chain produced by autocleavage. In terms of processing, cleaved into an alpha and beta chain by autocatalysis; this activates the enzyme. The N-terminal residue of the beta subunit is responsible for the nucleophile hydrolase activity.

The catalysed reaction is Cleavage of a beta-linked Asp residue from the N-terminus of a polypeptide.. It carries out the reaction L-asparagine + H2O = L-aspartate + NH4(+). Has both L-asparaginase and beta-aspartyl peptidase activity. Does not have aspartylglucosaminidase activity and is inactive toward GlcNAc-L-Asn. Likewise, has no activity toward glutamine. The sequence is that of Putative isoaspartyl peptidase/L-asparaginase from Dictyostelium discoideum (Social amoeba).